The primary structure comprises 267 residues: MKKVTIRDFIKKKSTKEKITMLTAYDYPTAKIISNTGLDSILVGDSLGMVVLGYANTLNVTMRDMISHTRAVARANPPQLIVADMPFLSYEIDTKSAVKNAGLLVKAGSDAIKLEGGEEMKDTVKAIVKAGIPVMGHIGLTPQRFLRLGGFRTIGKTKQEEDQLIKDSLELEDAGVFSLVIENTYVDIAKRITEKLNIPTICIGAGPYCDGQVLVINDLLGLSEFTPYFAKSYVNLKEIISNAINQYIIDVKNNKFPEKQHYKERES.

Mg(2+) contacts are provided by aspartate 45 and aspartate 84. 3-methyl-2-oxobutanoate is bound by residues 45-46 (DS), aspartate 84, and lysine 113. A Mg(2+)-binding site is contributed by glutamate 115. Glutamate 182 (proton acceptor) is an active-site residue.

It belongs to the PanB family. In terms of assembly, homodecamer; pentamer of dimers. The cofactor is Mg(2+).

The protein localises to the cytoplasm. It carries out the reaction 3-methyl-2-oxobutanoate + (6R)-5,10-methylene-5,6,7,8-tetrahydrofolate + H2O = 2-dehydropantoate + (6S)-5,6,7,8-tetrahydrofolate. The protein operates within cofactor biosynthesis; coenzyme A biosynthesis. Its function is as follows. Catalyzes the reversible reaction in which hydroxymethyl group from 5,10-methylenetetrahydrofolate is transferred onto alpha-ketoisovalerate to form ketopantoate. The protein is 3-methyl-2-oxobutanoate hydroxymethyltransferase of Saccharolobus islandicus (strain Y.G.57.14 / Yellowstone #1) (Sulfolobus islandicus).